The following is a 306-amino-acid chain: Ribosomal RNA small subunit methyltransferase H (306 aa).

Residues G37–H39, D56, D102, and Q109 each bind S-adenosyl-L-methionine.

It belongs to the methyltransferase superfamily. RsmH family.

Its subcellular location is the cytoplasm. It carries out the reaction cytidine(1402) in 16S rRNA + S-adenosyl-L-methionine = N(4)-methylcytidine(1402) in 16S rRNA + S-adenosyl-L-homocysteine + H(+). Functionally, specifically methylates the N4 position of cytidine in position 1402 (C1402) of 16S rRNA. This is Ribosomal RNA small subunit methyltransferase H from Nautilia profundicola (strain ATCC BAA-1463 / DSM 18972 / AmH).